The chain runs to 356 residues: MFS-type transporter tazK (356 aa).

9 consecutive transmembrane segments (helical) span residues 12–32 (LPFF…ALGH), 42–62 (FLGG…LADF), 69–89 (GVAV…GAIT), 102–122 (MTAW…FIIL), 178–198 (ILLS…LLFV), 211–231 (GAID…VGAF), 257–277 (LHPM…FAWT), 288–308 (ILAG…SLAY), and 320–340 (AISG…LFAP).

The protein belongs to the major facilitator superfamily. CAR1 family.

It is found in the membrane. MFS-type transporter; part of the gene cluster that mediates the biosynthesis of azaterrilone A and other azaphilones, a class of fungal metabolites characterized by a highly oxygenated pyrano-quinone bicyclic core and exhibiting a broad range of bioactivities. This is MFS-type transporter tazK from Aspergillus terreus (strain NIH 2624 / FGSC A1156).